The sequence spans 282 residues: uncharacterized protein (282 aa).

It belongs to the ycf80 family.

Its subcellular location is the plastid. It localises to the chloroplast. This is an uncharacterized protein from Guillardia theta (Cryptophyte).